A 428-amino-acid polypeptide reads, in one-letter code: Peptidase B (428 aa).

Lysine 195 and aspartate 200 together coordinate Mn(2+). The active site involves lysine 207. 3 residues coordinate Mn(2+): aspartate 218, aspartate 277, and glutamate 279. The active site involves arginine 281.

This sequence belongs to the peptidase M17 family. Homohexamer. It depends on Mn(2+) as a cofactor.

The protein localises to the cytoplasm. It carries out the reaction Release of an N-terminal amino acid, Xaa, from a peptide or arylamide. Xaa is preferably Glu or Asp but may be other amino acids, including Leu, Met, His, Cys and Gln.. Functionally, probably plays an important role in intracellular peptide degradation. In Klebsiella pneumoniae (strain 342), this protein is Peptidase B.